A 241-amino-acid polypeptide reads, in one-letter code: Gamma-interferon-inducible lysosomal thiol reductase-like protein (241 aa).

Positions 1-18 (MLFKSLLLLSVYAVTCYG) are cleaved as a signal peptide. 2 N-linked (GlcNAc...) asparagine glycosylation sites follow: asparagine 105 and asparagine 152. The helical transmembrane segment at 218 to 235 (STGSAISSLGMIVTVVAV) threads the bilayer.

Belongs to the GILT family. As to expression, salivary gland (at protein level). Low-level expression in midgut (at protein level). Expressed in head and leg tissues. Ovary. Fat body. (Microbial infection) Detected with Plasmodium berghei sporozoites isolated from the saliva of infected Anopheles gambiae mosquitoes (at protein level).

The protein resides in the membrane. Required for normal development of ovary and testis. Its function is as follows. (Microbial infection) Interacts with the surface of Plasmodium berghei sporozoites. Reduces P.berghei sporozoite cell traversal activity and transmission. Limits the motility of P.berghei sporozoites. Decreases the levels of host liver infection by P.berghei sporozoites. Does not affect P.berghei sporozoite viability. Indirectly promotes P.berghei survival in mosquitoes by influencing ovarian development and the subsequent production of 20-hydroxyecdysone and vitellogenin, which, in turn, modulates TEP1-dependent parasite killing. Promotes P.berghei infection in mosquitoes, most likely impacting the oocyst stage of parasite development. Functionally, (Microbial infection) Promotes Plasmodium falciparum survival in mosquitoes. This Anopheles gambiae (African malaria mosquito) protein is Gamma-interferon-inducible lysosomal thiol reductase-like protein.